A 405-amino-acid chain; its full sequence is MAGRFFDNVMPDFVKEKESVSGGDTLRNLLAMPYSSLSQQLKRSALDLKETVVIETWGFSGQTVEDFTLYSGTLGAAFLLFRAYQVTGNANDLSLCLEIVKACDTASASSGDVTFLCGRAGVCGLGAVAAKLSGEEDLLNYYLGQFRLIRLSSDLPNELLYGRVGYLWACLFINKYIGKETLSSDTIREVAQEIIKEGRSMAKKGSSPLMFEWYGKRYWGAAHGLAGIMHVLMDVQLKPDEAEDVKGTLKYMIKNRFPSGNYPASEEDKKKDILVHWCHGAPGIALTLGKAAEVFGEREFLEASAAAAEVVWNRGLLKRVGICHGISGNAYVFLALYRATGRSEYLYRAKAFASFLLDRGPKLLSKGEMHGGDSPYSLFEGVAGMAYLFLDMVDPSEARFPGYEL.

3 residues coordinate Zn(2+): C278, C323, and H324.

This sequence belongs to the LanC-like protein family.

Functionally, may play a role in signaling. May be not involved in abscisic acid (ABA) signaling. The polypeptide is LanC-like protein GCL2 (GCL2) (Arabidopsis thaliana (Mouse-ear cress)).